Reading from the N-terminus, the 327-residue chain is MAKAPMRVAVTGAAGQIGYSLLFRIANGDMLGKDQPVILQLLDLPQAQAAVKGVVMELEDCAFPLLAGVVITDDPKVAFKDADVALLVGARPRSKGMERKDLLEANAQIFTVQGKALDEVASRNVKVLVVGNPANTNAYIAMKSAPSLPRENFTAMLRLDHNRALSQIAAKTGKPVASIEKMFVWGNHSPTMYADYRYATVDGKSVKDMINDPVWNNDVFLPTVGKRGAAIIEARGLSSAASAANAAIDHVHDWVLGTNGKVVTMGIPSNGEYGIPADTMFGYPVTCANGKYEIVKGLEIDAYSQEKINITLNELEEEKAGVQHLLG.

12 to 18 contacts NAD(+); the sequence is GAAGQIG. R93 and R99 together coordinate substrate. Residues N106, Q113, and 130-132 each bind NAD(+); that span reads VGN. Residues N132 and R163 each contribute to the substrate site. Residue H188 is the Proton acceptor of the active site.

The protein belongs to the LDH/MDH superfamily. MDH type 2 family.

It carries out the reaction (S)-malate + NAD(+) = oxaloacetate + NADH + H(+). In terms of biological role, catalyzes the reversible oxidation of malate to oxaloacetate. This chain is Malate dehydrogenase, found in Cupriavidus pinatubonensis (strain JMP 134 / LMG 1197) (Cupriavidus necator (strain JMP 134)).